We begin with the raw amino-acid sequence, 144 residues long: Large ribosomal subunit protein uL14 (144 aa).

The protein belongs to the universal ribosomal protein uL14 family. Part of the 50S ribosomal subunit. Forms a cluster with proteins L3 and L24e, part of which may contact the 16S rRNA in 2 intersubunit bridges.

Functionally, binds to 23S rRNA. Forms part of two intersubunit bridges in the 70S ribosome. The polypeptide is Large ribosomal subunit protein uL14 (Pyrobaculum arsenaticum (strain DSM 13514 / JCM 11321 / PZ6)).